Here is a 221-residue protein sequence, read N- to C-terminus: Type 3 secretion system stator protein (221 aa).

The protein belongs to the SctL stator family. The core secretion machinery of the T3SS is composed of approximately 20 different proteins, including cytoplasmic components, a base, an export apparatus and a needle. This subunit is part of the cytosolic complex. Interacts directly with YscN/SctN (T3SS ATPase) and YscQ/SctQ (the major sorting platform component).

It localises to the cytoplasm. In terms of biological role, component of the type III secretion system (T3SS), also called injectisome, which is used to inject bacterial effector proteins into eukaryotic host cells. Acts as a regulator of the YscN/SctN ATPase activity. The chain is Type 3 secretion system stator protein from Yersinia pestis.